The primary structure comprises 549 residues: Cytoplasmic trehalase (549 aa).

Substrate contacts are provided by residues arginine 168, 175 to 176 (WD), asparagine 212, 221 to 223 (RSQ), 292 to 294 (RDE), and glycine 324. Active-site proton donor/acceptor residues include aspartate 326 and glutamate 509. Glutamate 525 serves as a coordination point for substrate.

Belongs to the glycosyl hydrolase 37 family. Monomer.

It localises to the cytoplasm. It carries out the reaction alpha,alpha-trehalose + H2O = alpha-D-glucose + beta-D-glucose. The protein operates within glycan degradation; trehalose degradation; D-glucose from alpha,alpha-trehalose: step 1/1. Hydrolyzes trehalose to glucose. Could be involved, in cells returning to low osmolarity conditions, in the utilization of the accumulated cytoplasmic trehalose, which was synthesized in response to high osmolarity. The protein is Cytoplasmic trehalase of Escherichia coli O139:H28 (strain E24377A / ETEC).